The primary structure comprises 153 residues: Ribosome maturation factor RimP (153 aa).

The protein belongs to the RimP family.

It localises to the cytoplasm. Functionally, required for maturation of 30S ribosomal subunits. This Synechococcus elongatus (strain ATCC 33912 / PCC 7942 / FACHB-805) (Anacystis nidulans R2) protein is Ribosome maturation factor RimP.